Here is a 388-residue protein sequence, read N- to C-terminus: Dual-specificity RNA methyltransferase RlmN (388 aa).

Glutamate 109 (proton acceptor) is an active-site residue. Residues glutamate 115–aspartate 354 form the Radical SAM core domain. Cysteine 122 and cysteine 359 are disulfide-bonded. Positions 129, 133, and 136 each coordinate [4Fe-4S] cluster. Residues glycine 183–glutamate 184, serine 215, serine 237–histidine 239, and asparagine 316 contribute to the S-adenosyl-L-methionine site. The active-site S-methylcysteine intermediate is cysteine 359.

Belongs to the radical SAM superfamily. RlmN family. Requires [4Fe-4S] cluster as cofactor.

The protein localises to the cytoplasm. It carries out the reaction adenosine(2503) in 23S rRNA + 2 reduced [2Fe-2S]-[ferredoxin] + 2 S-adenosyl-L-methionine = 2-methyladenosine(2503) in 23S rRNA + 5'-deoxyadenosine + L-methionine + 2 oxidized [2Fe-2S]-[ferredoxin] + S-adenosyl-L-homocysteine. The catalysed reaction is adenosine(37) in tRNA + 2 reduced [2Fe-2S]-[ferredoxin] + 2 S-adenosyl-L-methionine = 2-methyladenosine(37) in tRNA + 5'-deoxyadenosine + L-methionine + 2 oxidized [2Fe-2S]-[ferredoxin] + S-adenosyl-L-homocysteine. Its function is as follows. Specifically methylates position 2 of adenine 2503 in 23S rRNA and position 2 of adenine 37 in tRNAs. m2A2503 modification seems to play a crucial role in the proofreading step occurring at the peptidyl transferase center and thus would serve to optimize ribosomal fidelity. The chain is Dual-specificity RNA methyltransferase RlmN from Cronobacter sakazakii (strain ATCC BAA-894) (Enterobacter sakazakii).